A 252-amino-acid chain; its full sequence is Small ribosomal subunit protein uS3 (252 aa).

Residues Ile38–Lys106 enclose the KH type-2 domain. The interval Pro214 to Lys252 is disordered. Residues Gly224–Ala233 are compositionally biased toward gly residues.

Belongs to the universal ribosomal protein uS3 family. In terms of assembly, part of the 30S ribosomal subunit. Forms a tight complex with proteins S10 and S14.

Binds the lower part of the 30S subunit head. Binds mRNA in the 70S ribosome, positioning it for translation. This is Small ribosomal subunit protein uS3 from Flavobacterium johnsoniae (strain ATCC 17061 / DSM 2064 / JCM 8514 / BCRC 14874 / CCUG 350202 / NBRC 14942 / NCIMB 11054 / UW101) (Cytophaga johnsonae).